A 275-amino-acid chain; its full sequence is Trans-aconitate 2-methyltransferase (275 aa).

The protein belongs to the methyltransferase superfamily. Tam family.

It localises to the cytoplasm. The catalysed reaction is trans-aconitate + S-adenosyl-L-methionine = (E)-3-(methoxycarbonyl)pent-2-enedioate + S-adenosyl-L-homocysteine. Functionally, catalyzes the S-adenosylmethionine monomethyl esterification of trans-aconitate. In Pseudomonas aeruginosa (strain ATCC 15692 / DSM 22644 / CIP 104116 / JCM 14847 / LMG 12228 / 1C / PRS 101 / PAO1), this protein is Trans-aconitate 2-methyltransferase.